Consider the following 624-residue polypeptide: Multicopper oxidase elcG (624 aa).

The signal sequence occupies residues 1–18 (MACNILNFLTGLLSLSST). 2 consecutive Plastocyanin-like domains span residues 48-160 (PGRA…IERG) and 216-373 (CMDA…TIRI). N-linked (GlcNAc...) asparagine glycosylation occurs at Asn-65. Residues His-96, His-98, His-140, and His-142 each contribute to the Cu cation site. N-linked (GlcNAc...) asparagine glycosylation is found at Asn-271, Asn-296, and Asn-464. The region spanning 474–603 (FLFQDPSQIE…GGMGVVILDG (130 aa)) is the Plastocyanin-like 3 domain. 7 residues coordinate Cu cation: His-511, His-514, His-516, His-585, Cys-586, His-587, and His-591.

The protein belongs to the multicopper oxidase family.

It participates in secondary metabolite biosynthesis. Functionally, multicopper oxidase; part of the gene cluster that mediates the biosynthesis of elsinochrome C, a perelyenequinone phytotoxin structurally similar to cercosporin. The first step of elsinochrome C biosynthesis is performed by the polyketide synthase elcA which catalyzes the formation of nor-toralactone. The starter unit acyltransferase (SAT) domain of elcA initiates polyketide extension by the selective utilization of acetyl-CoA, which is elongated to the heptaketide in the beta-ketoacyl synthase (KS) domain by successive condensations with six malonyl units introduced by the malonyl acyltransferase (MAT) domain. The product template (PT) domain catalyzes C4-C9 and C2-C11 aldol cyclizations and dehydrations to a trihydroxynaphthalene, which is thought to be delivered to the thioesterase (TE) domain for product release. The bifunctional enzyme elcB then methylates nor-toralactone to toralactone before conducting an unusual oxidative aromatic ring opening. The next step in perylenequinone biosynthesis is an O-methylation at the nascent OH-6 of the elcB product performed by the O-methyltransferase elcD. The oxidative coupling of the two monomeric naphthol units in perylenequinone biosynthesis is catalyzed by the FAD-dependent monooxygenase elcE and the multicopper oxidase elcG. ElcG might catalyze the first intermolecular coupling in a regio- and stereo-selective manner via a phenol radical coupling mechanism and the elcE could forge the second C-C bond intramolecularly via a hydride transfer mechanism. The fasciclin domain-containing protein elcF might also play a role duting this step. The last piece of the puzzle in the biosynthesis of elsinochrome C is the additional annulation by enolate coupling to afford the dihydrobenzo(ghi)perylenequinone system, catalyzed by the FAD-dependent monooxygenase elcH. The protein is Multicopper oxidase elcG of Phaeosphaeria nodorum (strain SN15 / ATCC MYA-4574 / FGSC 10173) (Glume blotch fungus).